Here is a 458-residue protein sequence, read N- to C-terminus: Serine--tRNA ligase (458 aa).

255-257 (TSE) contributes to the L-serine binding site. ATP contacts are provided by residues 286–288 (RKE) and Val302. Glu309 contacts L-serine. Position 373-376 (373-376 (ELVS)) interacts with ATP. Residue Thr409 participates in L-serine binding.

The protein belongs to the class-II aminoacyl-tRNA synthetase family. Type-1 seryl-tRNA synthetase subfamily. In terms of assembly, homodimer. The tRNA molecule binds across the dimer.

Its subcellular location is the cytoplasm. The catalysed reaction is tRNA(Ser) + L-serine + ATP = L-seryl-tRNA(Ser) + AMP + diphosphate + H(+). It carries out the reaction tRNA(Sec) + L-serine + ATP = L-seryl-tRNA(Sec) + AMP + diphosphate + H(+). It functions in the pathway aminoacyl-tRNA biosynthesis; selenocysteinyl-tRNA(Sec) biosynthesis; L-seryl-tRNA(Sec) from L-serine and tRNA(Sec): step 1/1. Catalyzes the attachment of serine to tRNA(Ser). Is also able to aminoacylate tRNA(Sec) with serine, to form the misacylated tRNA L-seryl-tRNA(Sec), which will be further converted into selenocysteinyl-tRNA(Sec). The sequence is that of Serine--tRNA ligase from Ignicoccus hospitalis (strain KIN4/I / DSM 18386 / JCM 14125).